A 360-amino-acid chain; its full sequence is Phospho-N-acetylmuramoyl-pentapeptide-transferase (360 aa).

Transmembrane regions (helical) follow at residues 26–46 (AIMS…RLIA), 70–90 (GTPT…ALLW), 94–114 (SNPY…VGFV), 132–152 (WKYF…YMHG), 168–188 (VMPQ…VGTS), 199–219 (GLAI…AWAT), 239–259 (LVVL…FNTY), 263–283 (VFMG…IAVL), 288–308 (LLLV…ILQV), and 338–358 (VIVR…ATLK).

It belongs to the glycosyltransferase 4 family. MraY subfamily. Mg(2+) is required as a cofactor.

The protein localises to the cell inner membrane. It carries out the reaction UDP-N-acetyl-alpha-D-muramoyl-L-alanyl-gamma-D-glutamyl-meso-2,6-diaminopimeloyl-D-alanyl-D-alanine + di-trans,octa-cis-undecaprenyl phosphate = di-trans,octa-cis-undecaprenyl diphospho-N-acetyl-alpha-D-muramoyl-L-alanyl-D-glutamyl-meso-2,6-diaminopimeloyl-D-alanyl-D-alanine + UMP. The protein operates within cell wall biogenesis; peptidoglycan biosynthesis. Its function is as follows. Catalyzes the initial step of the lipid cycle reactions in the biosynthesis of the cell wall peptidoglycan: transfers peptidoglycan precursor phospho-MurNAc-pentapeptide from UDP-MurNAc-pentapeptide onto the lipid carrier undecaprenyl phosphate, yielding undecaprenyl-pyrophosphoryl-MurNAc-pentapeptide, known as lipid I. The chain is Phospho-N-acetylmuramoyl-pentapeptide-transferase from Photobacterium profundum (strain SS9).